Consider the following 35-residue polypeptide: 30 kDa neutral phosphatase (35 aa).

Positions 1-28 are enriched in polar residues; it reads KSSAEVQQTQQASIPASQKANLGNQNNI. The tract at residues 1–35 is disordered; that stretch reads KSSAEVQQTQQASIPASQKANLGNQNNIMXVAXYQ.

In terms of biological role, highly cationic enzyme that can bind human or rat immunoglobulins as well as serum albumin, and could therefore be involved in post-infectious sequelae. This chain is 30 kDa neutral phosphatase, found in Staphylococcus aureus.